The chain runs to 420 residues: Gamma-glutamyl phosphate reductase (420 aa).

The protein belongs to the gamma-glutamyl phosphate reductase family.

It localises to the cytoplasm. It catalyses the reaction L-glutamate 5-semialdehyde + phosphate + NADP(+) = L-glutamyl 5-phosphate + NADPH + H(+). It functions in the pathway amino-acid biosynthesis; L-proline biosynthesis; L-glutamate 5-semialdehyde from L-glutamate: step 2/2. In terms of biological role, catalyzes the NADPH-dependent reduction of L-glutamate 5-phosphate into L-glutamate 5-semialdehyde and phosphate. The product spontaneously undergoes cyclization to form 1-pyrroline-5-carboxylate. This chain is Gamma-glutamyl phosphate reductase, found in Neisseria meningitidis serogroup C / serotype 2a (strain ATCC 700532 / DSM 15464 / FAM18).